Reading from the N-terminus, the 185-residue chain is Putative lipoprotein LprB (185 aa).

An N-terminal signal peptide occupies residues 1 to 24 (MRRKVRRLTLAVSALVALFPAVAG). Cysteine 25 carries N-palmitoyl cysteine lipidation. Cysteine 25 carries the S-diacylglycerol cysteine lipid modification. The tract at residues 26–50 (SDSGDNKPGATIPSTPANAEGRHGP) is disordered.

It is found in the cell membrane. The polypeptide is Putative lipoprotein LprB (lprB) (Mycobacterium tuberculosis (strain CDC 1551 / Oshkosh)).